The chain runs to 86 residues: Toxin CngtIV (86 aa).

The first 19 residues, 1 to 19, serve as a signal peptide directing secretion; that stretch reads MNSLLIITACLVLIGTVWA. In terms of domain architecture, LCN-type CS-alpha/beta spans 20–84; the sequence is KDGYLVDVKG…TWPLPNKRCG (65 aa). Intrachain disulfides connect cysteine 30-cysteine 83, cysteine 34-cysteine 59, cysteine 43-cysteine 64, and cysteine 47-cysteine 66.

This sequence belongs to the long (4 C-C) scorpion toxin superfamily. Sodium channel inhibitor family. Beta subfamily. Expressed by the venom gland.

It localises to the secreted. In terms of biological role, beta toxins bind voltage-independently at site-4 of sodium channels (Nav) and shift the voltage of activation toward more negative potentials thereby affecting sodium channel activation and promoting spontaneous and repetitive firing. The polypeptide is Toxin CngtIV (Centruroides noxius (Mexican scorpion)).